A 444-amino-acid polypeptide reads, in one-letter code: tRNA modification GTPase MnmE (444 aa).

(6S)-5-formyl-5,6,7,8-tetrahydrofolate contacts are provided by arginine 24, glutamate 81, and lysine 121. In terms of domain architecture, TrmE-type G spans 218–368 (GLTVVIAGPP…LLDALVGFAR (151 aa)). GTP is bound by residues 228–233 (NAGKST), 247–253 (SPQAGTT), 272–275 (DTAG), and 349–351 (SAR). Mg(2+) contacts are provided by serine 232 and threonine 253. (6S)-5-formyl-5,6,7,8-tetrahydrofolate is bound at residue lysine 444.

The protein belongs to the TRAFAC class TrmE-Era-EngA-EngB-Septin-like GTPase superfamily. TrmE GTPase family. In terms of assembly, homodimer. Heterotetramer of two MnmE and two MnmG subunits. Requires K(+) as cofactor.

The protein localises to the cytoplasm. Exhibits a very high intrinsic GTPase hydrolysis rate. Involved in the addition of a carboxymethylaminomethyl (cmnm) group at the wobble position (U34) of certain tRNAs, forming tRNA-cmnm(5)s(2)U34. In Bradyrhizobium sp. (strain ORS 278), this protein is tRNA modification GTPase MnmE.